A 748-amino-acid polypeptide reads, in one-letter code: Holliday junction recognition protein (748 aa).

Residues Ser123, Ser140, Ser185, Ser201, and Ser211 each carry the phosphoserine modification. Residues 191–226 are disordered; sequence PGYCSRISRKSPGDPAKPASSPREWDPLHPSSTDMA. A Glycyl lysine isopeptide (Lys-Gly) (interchain with G-Cter in SUMO2) cross-link involves residue Lys354. Phosphoserine is present on residues Ser412, Ser448, and Ser473. Ser486 bears the Phosphoserine; by PKB/AKT1 mark. Position 496 is a phosphoserine (Ser496). The disordered stretch occupies residues 512–574; sequence GRCLPKSDSS…PDKEVPGHGR (63 aa). Polar residues predominate over residues 524 to 562; the sequence is LPKTNPTHSATRPQQTSDLHVQGNSSGIFRKSVSPSKTL. A compositionally biased stretch (basic and acidic residues) spans 565–574; sequence PDKEVPGHGR. Residues Lys581 and Lys586 each participate in a glycyl lysine isopeptide (Lys-Gly) (interchain with G-Cter in SUMO2) cross-link. A phosphoserine mark is found at Ser595 and Ser642. The disordered stretch occupies residues 670-748; the sequence is RDGTRDHQFP…MLEKLETKSV (79 aa). Residues 688–699 show a composition bias toward polar residues; the sequence is PQGSGRQGNSLG. Positions 721 to 748 are enriched in basic and acidic residues; sequence SEERGENTSYRMEEKSDFMLEKLETKSV.

As to quaternary structure, interacts with CENPA (via CATD domain); the interaction is direct and specific for CENPA since it does not interact with H3.1- or H3.3-containing nucleosomes. Heterotrimer composed of HJURP, CENPA and histone H4, where HJURP interacts with the dimer formed by CENPA and histone H4 and prevents tetramerization of CENPA and H4. Identified in a centromere complex containing histones H2A, H2B and H4, and at least CENPA, CENPB, CENPC, CENPT, CENPN, HJURP, SUPT16H, SSRP1 and RSF1. Interacts with 14-3-3 family members in a phosphorylation-dependent manner. Interacts with MSH5 and NBN. In terms of tissue distribution, according to PubMed:17256767, highly expressed in the thymus with lower levels in the placenta, small intestine, liver, skeletal muscle, and colon. According to PubMed:17823411, highly expressed in testis, and at a relatively lower level in thymus and bone marrow. Significantly overexpressed in many lung cancer samples, compared with normal lung.

It is found in the nucleus. The protein resides in the nucleolus. Its subcellular location is the chromosome. The protein localises to the centromere. In terms of biological role, centromeric protein that plays a central role in the incorporation and maintenance of histone H3-like variant CENPA at centromeres. Acts as a specific chaperone for CENPA and is required for the incorporation of newly synthesized CENPA molecules into nucleosomes at replicated centromeres. Prevents CENPA-H4 tetramerization and prevents premature DNA binding by the CENPA-H4 tetramer. Directly binds Holliday junctions. This chain is Holliday junction recognition protein (HJURP), found in Homo sapiens (Human).